The primary structure comprises 1187 residues: Trafficking protein particle complex II-specific subunit 120 homolog (1187 aa).

The segment at 1037–1059 (GTTAKTDSSKEPGDGSSRSADES) is disordered.

The protein belongs to the TRS120 family. In terms of assembly, part of the multisubunit TRAPP (transport protein particle) II complex composed of BET3, BET5, TRS20, TRS23, TRS31, TRS33, TRS65, TRS85, TRS120 and TRS130.

Its subcellular location is the golgi apparatus. The protein localises to the trans-Golgi network. It is found in the early endosome. Its function is as follows. Specific subunit of the TRAPP II complex, a highly conserved vesicle tethering complex that is required for the proper transport of proteins in post-Golgi trafficking pathways to the growing cell plate in mitotic active cells. This chain is Trafficking protein particle complex II-specific subunit 120 homolog, found in Oryza sativa subsp. japonica (Rice).